A 363-amino-acid chain; its full sequence is MRDETPEQPAPLRFGYTTGSCASATSLAAARLLLTGVASDTVDIVLPKGQHVAMRLAFCRATDDGGAEAGTIKDAGDDPDVTHGALVFARVRLVHEPGVRFRAGPGVGTVTRAGLPIAVGEPAINPVPRRMMTEHLAALAAEHGYAGGFDVAIGVENGEALARKTMNPRLGIVGGLSILGTTGIVRPFSCSAYIASIHQGIDVARANGVTHIAACTGNASEDAVRARYGLPDIALIEMGDFAGAVLKYLRRASVARLTLCGGFGKLSKLAAGHLDLHSRHSSIDLPLLAEWAGEAGASAVLQHEIRAANTSQQALALALAHHVPLGDVVCAHARRVARDIVPGEVDVETLAIDREGRIVGVAP.

It belongs to the CbiD family.

It carries out the reaction Co-precorrin-5B + S-adenosyl-L-methionine = Co-precorrin-6A + S-adenosyl-L-homocysteine. The protein operates within cofactor biosynthesis; adenosylcobalamin biosynthesis; cob(II)yrinate a,c-diamide from sirohydrochlorin (anaerobic route): step 6/10. In terms of biological role, catalyzes the methylation of C-1 in cobalt-precorrin-5B to form cobalt-precorrin-6A. In Burkholderia pseudomallei (strain K96243), this protein is Cobalt-precorrin-5B C(1)-methyltransferase.